We begin with the raw amino-acid sequence, 448 residues long: N-succinylarginine dihydrolase (448 aa).

Substrate contacts are provided by residues 19–28 (GGLSYGNVAS), Asn110, and 137–138 (HR). Residue Glu174 is part of the active site. Residue Arg214 coordinates substrate. His250 is a catalytic residue. Positions 252 and 365 each coordinate substrate. Catalysis depends on Cys371, which acts as the Nucleophile.

Belongs to the succinylarginine dihydrolase family. As to quaternary structure, homodimer.

It carries out the reaction N(2)-succinyl-L-arginine + 2 H2O + 2 H(+) = N(2)-succinyl-L-ornithine + 2 NH4(+) + CO2. The protein operates within amino-acid degradation; L-arginine degradation via AST pathway; L-glutamate and succinate from L-arginine: step 2/5. In terms of biological role, catalyzes the hydrolysis of N(2)-succinylarginine into N(2)-succinylornithine, ammonia and CO(2). The sequence is that of N-succinylarginine dihydrolase from Pseudomonas aeruginosa (strain LESB58).